The sequence spans 244 residues: Ribonuclease P protein component 3 (244 aa).

It belongs to the eukaryotic/archaeal RNase P protein component 3 family. As to quaternary structure, consists of a catalytic RNA component and at least 4-5 protein subunits.

Its subcellular location is the cytoplasm. It carries out the reaction Endonucleolytic cleavage of RNA, removing 5'-extranucleotides from tRNA precursor.. Its function is as follows. Part of ribonuclease P, a protein complex that generates mature tRNA molecules by cleaving their 5'-ends. This Methanopyrus kandleri (strain AV19 / DSM 6324 / JCM 9639 / NBRC 100938) protein is Ribonuclease P protein component 3.